The chain runs to 477 residues: Bifunctional protein HldE (477 aa).

The ribokinase stretch occupies residues M1 to T318. Residue K179 is modified to N6-acetyllysine. N195–E198 contacts ATP. The active site involves D264. The tract at residues M344 to G477 is cytidylyltransferase.

This sequence in the N-terminal section; belongs to the carbohydrate kinase PfkB family. In the C-terminal section; belongs to the cytidylyltransferase family. As to quaternary structure, homodimer.

It catalyses the reaction D-glycero-beta-D-manno-heptose 7-phosphate + ATP = D-glycero-beta-D-manno-heptose 1,7-bisphosphate + ADP + H(+). It carries out the reaction D-glycero-beta-D-manno-heptose 1-phosphate + ATP + H(+) = ADP-D-glycero-beta-D-manno-heptose + diphosphate. It participates in nucleotide-sugar biosynthesis; ADP-L-glycero-beta-D-manno-heptose biosynthesis; ADP-L-glycero-beta-D-manno-heptose from D-glycero-beta-D-manno-heptose 7-phosphate: step 1/4. Its pathway is nucleotide-sugar biosynthesis; ADP-L-glycero-beta-D-manno-heptose biosynthesis; ADP-L-glycero-beta-D-manno-heptose from D-glycero-beta-D-manno-heptose 7-phosphate: step 3/4. The protein operates within bacterial outer membrane biogenesis; LPS core biosynthesis. Functionally, catalyzes the phosphorylation of D-glycero-D-manno-heptose 7-phosphate at the C-1 position to selectively form D-glycero-beta-D-manno-heptose-1,7-bisphosphate. In terms of biological role, catalyzes the ADP transfer from ATP to D-glycero-beta-D-manno-heptose 1-phosphate, yielding ADP-D-glycero-beta-D-manno-heptose. This Shigella flexneri protein is Bifunctional protein HldE.